The following is a 732-amino-acid chain: Integrator complex subunit 13 (732 aa).

A compositionally biased stretch (basic and acidic residues) spans 564 to 648 (PPEEEERKKR…DETPHMEKSK (85 aa)). The interval 564–650 (PPEEEERKKR…TPHMEKSKGP (87 aa)) is disordered. Residues 572-582 (KRGRKREDRED) carry the Nuclear localization signal (NLS) motif. A Glycyl lysine isopeptide (Lys-Gly) (interchain with G-Cter in SUMO2) cross-link involves residue Lys-611. Residues Ser-623, Ser-626, and Ser-678 each carry the phosphoserine modification. The segment at 649–694 (GPVSLLSLWSNRINTANSRKHQEFAGRLNSVNNRAELYQHLKEENG) is cleavage module binding motif (CMBM).

This sequence belongs to the Integrator subunit 13 family. Component of the Integrator complex, composed of core subunits INTS1, INTS2, INTS3, INTS4, INTS5, INTS6, INTS7, INTS8, INTS9/RC74, INTS10, INTS11/CPSF3L, INTS12, INTS13, INTS14 and INTS15. The core complex associates with protein phosphatase 2A subunits PPP2CA and PPP2R1A, to form the Integrator-PP2A (INTAC) complex. INTS13 is part of the tail subcomplex, composed of INTS10, INTS13, INTS14 and INTS15. Interacts with transcription factors ZNF609 and ZNF655. Interacts with PAFAH1B1; this interaction may be required for proper recruitment of dynein complexes to the nuclear envelope at prophase.

It is found in the nucleus. The protein resides in the cytoplasm. Its function is as follows. Component of the integrator complex, a multiprotein complex that terminates RNA polymerase II (Pol II) transcription in the promoter-proximal region of genes. The integrator complex provides a quality checkpoint during transcription elongation by driving premature transcription termination of transcripts that are unfavorably configured for transcriptional elongation: the complex terminates transcription by (1) catalyzing dephosphorylation of the C-terminal domain (CTD) of Pol II subunit POLR2A/RPB1 and SUPT5H/SPT5, (2) degrading the exiting nascent RNA transcript via endonuclease activity and (3) promoting the release of Pol II from bound DNA. The integrator complex is also involved in terminating the synthesis of non-coding Pol II transcripts, such as enhancer RNAs (eRNAs), small nuclear RNAs (snRNAs), telomerase RNAs and long non-coding RNAs (lncRNAs). Within the integrator complex, INTS13 is part of the integrator tail module and acts as a platform for the recruitment of transcription factors at promoters. At prophase, mediates recruitment of cytoplasmic dynein to the nuclear envelope, a step important for proper centrosome-nucleus coupling. At G2/M phase, may be required for proper spindle formation and execution of cytokinesis. The protein is Integrator complex subunit 13 of Mus musculus (Mouse).